The chain runs to 321 residues: Lipoyl synthase (321 aa).

[4Fe-4S] cluster-binding residues include C68, C73, C79, C94, C98, C101, and S308. The Radical SAM core domain occupies 80 to 297 (FNHGTATFMI…KAEALAMGFT (218 aa)).

The protein belongs to the radical SAM superfamily. Lipoyl synthase family. [4Fe-4S] cluster serves as cofactor.

It localises to the cytoplasm. It carries out the reaction [[Fe-S] cluster scaffold protein carrying a second [4Fe-4S](2+) cluster] + N(6)-octanoyl-L-lysyl-[protein] + 2 oxidized [2Fe-2S]-[ferredoxin] + 2 S-adenosyl-L-methionine + 4 H(+) = [[Fe-S] cluster scaffold protein] + N(6)-[(R)-dihydrolipoyl]-L-lysyl-[protein] + 4 Fe(3+) + 2 hydrogen sulfide + 2 5'-deoxyadenosine + 2 L-methionine + 2 reduced [2Fe-2S]-[ferredoxin]. It participates in protein modification; protein lipoylation via endogenous pathway; protein N(6)-(lipoyl)lysine from octanoyl-[acyl-carrier-protein]: step 2/2. Functionally, catalyzes the radical-mediated insertion of two sulfur atoms into the C-6 and C-8 positions of the octanoyl moiety bound to the lipoyl domains of lipoate-dependent enzymes, thereby converting the octanoylated domains into lipoylated derivatives. The chain is Lipoyl synthase from Escherichia coli O9:H4 (strain HS).